The chain runs to 433 residues: 3-phosphoshikimate 1-carboxyvinyltransferase (433 aa).

Residues Lys-22, Ser-23, and Arg-27 each contribute to the 3-phosphoshikimate site. Lys-22 provides a ligand contact to phosphoenolpyruvate. The phosphoenolpyruvate site is built by Gly-95 and Arg-123. Residues Ser-167, Gln-169, Asp-315, and Lys-342 each coordinate 3-phosphoshikimate. Residue Gln-169 participates in phosphoenolpyruvate binding. The Proton acceptor role is filled by Asp-315. 2 residues coordinate phosphoenolpyruvate: Arg-346 and Arg-387.

This sequence belongs to the EPSP synthase family. In terms of assembly, monomer.

It is found in the cytoplasm. It catalyses the reaction 3-phosphoshikimate + phosphoenolpyruvate = 5-O-(1-carboxyvinyl)-3-phosphoshikimate + phosphate. It participates in metabolic intermediate biosynthesis; chorismate biosynthesis; chorismate from D-erythrose 4-phosphate and phosphoenolpyruvate: step 6/7. Catalyzes the transfer of the enolpyruvyl moiety of phosphoenolpyruvate (PEP) to the 5-hydroxyl of shikimate-3-phosphate (S3P) to produce enolpyruvyl shikimate-3-phosphate and inorganic phosphate. The polypeptide is 3-phosphoshikimate 1-carboxyvinyltransferase (Legionella pneumophila subsp. pneumophila (strain Philadelphia 1 / ATCC 33152 / DSM 7513)).